The following is a 713-amino-acid chain: Ribosomal RNA large subunit methyltransferase K/L (713 aa).

The region spanning 43 to 154 is the THUMP domain; it reads LAYRITLWTR…NGVITIAMNF (112 aa).

It belongs to the methyltransferase superfamily. RlmKL family.

It is found in the cytoplasm. The catalysed reaction is guanosine(2445) in 23S rRNA + S-adenosyl-L-methionine = N(2)-methylguanosine(2445) in 23S rRNA + S-adenosyl-L-homocysteine + H(+). It catalyses the reaction guanosine(2069) in 23S rRNA + S-adenosyl-L-methionine = N(2)-methylguanosine(2069) in 23S rRNA + S-adenosyl-L-homocysteine + H(+). In terms of biological role, specifically methylates the guanine in position 2445 (m2G2445) and the guanine in position 2069 (m7G2069) of 23S rRNA. The chain is Ribosomal RNA large subunit methyltransferase K/L from Shewanella sp. (strain MR-4).